Reading from the N-terminus, the 397-residue chain is Ubiquitin-like modifier-activating enzyme 5 (397 aa).

5 residues coordinate ATP: Gly76, Asp97, Lys120, Asn143, and Asn177. Residues Cys219 and Cys222 each coordinate Zn(2+). Catalysis depends on Cys243, which acts as the Glycyl thioester intermediate. Residues Cys296 and Cys301 each contribute to the Zn(2+) site. Residues 327–339 (IVHEDNDWGIELV) carry the UFM1-interacting sequence (UIS) motif. Residues 340–370 (SETTEDELKAASGPVPDLPVGITVAYTIPNK) are linker. The UFC1-binding sequence (UFC) motif lies at 382–397 (ESEESLEDLMAKMRNL).

The protein belongs to the ubiquitin-activating E1 family. UBA5 subfamily. Homodimer; homodimerization is required for UFM1 activation. Interacts (via UIS motif) with UFM1; binds UFM1 via a trans-binding mechanism in which UFM1 interacts with distinct sites in both subunits of the UBA5 homodimer. Interacts (via C-terminus) with UFC1.

It localises to the cytoplasm. The protein localises to the nucleus. The protein resides in the endoplasmic reticulum membrane. It is found in the golgi apparatus. Its function is as follows. E1-like enzyme which specifically catalyzes the first step in ufmylation. Activates UFM1 by first adenylating its C-terminal glycine residue with ATP, and thereafter linking this residue to the side chain of a cysteine residue in E1, yielding a UFM1-E1 thioester and free AMP. Activates UFM1 via a trans-binding mechanism, in which UFM1 interacts with distinct sites in both subunits of the UBA5 homodimer. Trans-binding also promotes stabilization of the UBA5 homodimer, and enhances ATP-binding. Transfer of UFM1 from UBA5 to the E2-like enzyme UFC1 also takes place using a trans mechanism. Ufmylation plays a key role in various processes, such as ribosome recycling, response to DNA damage, interferon response or reticulophagy (also called ER-phagy). The chain is Ubiquitin-like modifier-activating enzyme 5 from Gallus gallus (Chicken).